Here is a 284-residue protein sequence, read N- to C-terminus: tRNA pseudouridine synthase A (284 aa).

Asp-62 functions as the Nucleophile in the catalytic mechanism. Tyr-123 lines the substrate pocket.

The protein belongs to the tRNA pseudouridine synthase TruA family. As to quaternary structure, homodimer.

The enzyme catalyses uridine(38/39/40) in tRNA = pseudouridine(38/39/40) in tRNA. Its function is as follows. Formation of pseudouridine at positions 38, 39 and 40 in the anticodon stem and loop of transfer RNAs. The chain is tRNA pseudouridine synthase A from Streptomyces griseus subsp. griseus (strain JCM 4626 / CBS 651.72 / NBRC 13350 / KCC S-0626 / ISP 5235).